Here is a 491-residue protein sequence, read N- to C-terminus: UDP-N-acetylmuramate--L-alanine ligase (491 aa).

126–132 (GTHGKTT) is an ATP binding site.

The protein belongs to the MurCDEF family.

The protein resides in the cytoplasm. It carries out the reaction UDP-N-acetyl-alpha-D-muramate + L-alanine + ATP = UDP-N-acetyl-alpha-D-muramoyl-L-alanine + ADP + phosphate + H(+). Its pathway is cell wall biogenesis; peptidoglycan biosynthesis. Functionally, cell wall formation. The chain is UDP-N-acetylmuramate--L-alanine ligase from Yersinia pestis (strain Pestoides F).